Reading from the N-terminus, the 601-residue chain is Glutathione-regulated potassium-efflux system protein KefB (601 aa).

Helical transmembrane passes span 5–25 (DLLL…PIAA), 29–49 (IGAV…GLGF), 55–75 (EILH…GLEL), 87–107 (IFGI…GLLM), 115–135 (AAVV…LQLM), 152–172 (VLLF…LLAG), 181–201 (LKIG…RYLL), 207–227 (FIAG…LVLG), 230–250 (LFMD…GILL), 268–288 (GLLL…GVLY), 291–311 (ILWV…VLYG), 324–344 (LPFA…FSSA), and 356–376 (ALLL…MKGI). The region spanning 400–519 (KPQVIIVGFG…AGVKQFSRET (120 aa)) is the RCK N-terminal domain.

This sequence belongs to the monovalent cation:proton antiporter 2 (CPA2) transporter (TC 2.A.37) family. KefB subfamily. Interacts with the regulatory subunit KefG.

The protein resides in the cell inner membrane. Functionally, pore-forming subunit of a potassium efflux system that confers protection against electrophiles. Catalyzes K(+)/H(+) antiport. This chain is Glutathione-regulated potassium-efflux system protein KefB, found in Cronobacter sakazakii (strain ATCC BAA-894) (Enterobacter sakazakii).